Here is a 942-residue protein sequence, read N- to C-terminus: Homeobox transcription factor phx1 (942 aa).

Composition is skewed to polar residues over residues Met-1–Tyr-19, His-61–Asn-73, Ala-99–Ser-116, and Ile-122–Asn-135. Disordered stretches follow at residues Met-1–Pro-54, His-61–Asp-80, Lys-87–Arg-172, Trp-604–Thr-651, and Ser-892–Ser-922. Positions Ser-142–Ala-151 are enriched in basic and acidic residues. Over residues Glu-153–Ser-164 the composition is skewed to low complexity. The segment at residues Ser-164 to Ile-224 is a DNA-binding region (homeobox). Polar residues-rich tracts occupy residues Trp-604 to Ser-614 and Ser-630 to Ser-641.

It is found in the nucleus. Trnascription factor that regulates the expression of the homocitrate synthase (HCS) lys4. The polypeptide is Homeobox transcription factor phx1 (phx1) (Schizosaccharomyces pombe (strain 972 / ATCC 24843) (Fission yeast)).